The primary structure comprises 125 residues: Small ribosomal subunit protein eS8 (125 aa).

Positions 1–35 are disordered; the sequence is MQWQGRSVRKPSGGRYHTSQGKKRTEIGRAPAETH.

Belongs to the eukaryotic ribosomal protein eS8 family. In terms of assembly, part of the 30S ribosomal subunit.

The polypeptide is Small ribosomal subunit protein eS8 (Methanoculleus marisnigri (strain ATCC 35101 / DSM 1498 / JR1)).